The sequence spans 243 residues: UPF0246 protein spyM18_2163 (243 aa).

Belongs to the UPF0246 family.

The chain is UPF0246 protein spyM18_2163 from Streptococcus pyogenes serotype M18 (strain MGAS8232).